The sequence spans 161 residues: ATP synthase subunit b 1 (161 aa).

A helical membrane pass occupies residues 1–21 (MFATAEFWILACLVAFFAILG).

Belongs to the ATPase B chain family. In terms of assembly, F-type ATPases have 2 components, F(1) - the catalytic core - and F(0) - the membrane proton channel. F(1) has five subunits: alpha(3), beta(3), gamma(1), delta(1), epsilon(1). F(0) has three main subunits: a(1), b(2) and c(10-14). The alpha and beta chains form an alternating ring which encloses part of the gamma chain. F(1) is attached to F(0) by a central stalk formed by the gamma and epsilon chains, while a peripheral stalk is formed by the delta and b chains.

It is found in the cell inner membrane. F(1)F(0) ATP synthase produces ATP from ADP in the presence of a proton or sodium gradient. F-type ATPases consist of two structural domains, F(1) containing the extramembraneous catalytic core and F(0) containing the membrane proton channel, linked together by a central stalk and a peripheral stalk. During catalysis, ATP synthesis in the catalytic domain of F(1) is coupled via a rotary mechanism of the central stalk subunits to proton translocation. In terms of biological role, component of the F(0) channel, it forms part of the peripheral stalk, linking F(1) to F(0). The sequence is that of ATP synthase subunit b 1 from Parvibaculum lavamentivorans (strain DS-1 / DSM 13023 / NCIMB 13966).